Reading from the N-terminus, the 367-residue chain is Flagellar P-ring protein (367 aa).

The first 21 residues, 1–21 (MKIIQTFFIITLLWLSQGVQA), serve as a signal peptide directing secretion.

The protein belongs to the FlgI family. The basal body constitutes a major portion of the flagellar organelle and consists of four rings (L,P,S, and M) mounted on a central rod.

The protein localises to the periplasm. The protein resides in the bacterial flagellum basal body. In terms of biological role, assembles around the rod to form the L-ring and probably protects the motor/basal body from shearing forces during rotation. The chain is Flagellar P-ring protein from Nitrosococcus oceani (strain ATCC 19707 / BCRC 17464 / JCM 30415 / NCIMB 11848 / C-107).